We begin with the raw amino-acid sequence, 105 residues long: Ketoisovalerate oxidoreductase subunit VorD (105 aa).

4Fe-4S ferredoxin-type domains follow at residues 44 to 73 and 74 to 103; these read FKPV…IKPD and GYVA…MIKE. [4Fe-4S] cluster contacts are provided by Cys53, Cys56, Cys59, Cys63, Cys83, Cys86, Cys89, and Cys93.

Heterotetramer of one alpha, one beta, one delta and one gamma chain. [4Fe-4S] cluster serves as cofactor.

The enzyme catalyses 3-methyl-2-oxobutanoate + 2 oxidized [2Fe-2S]-[ferredoxin] + CoA = 2-methylpropanoyl-CoA + 2 reduced [2Fe-2S]-[ferredoxin] + CO2 + H(+). This Pyrococcus furiosus (strain ATCC 43587 / DSM 3638 / JCM 8422 / Vc1) protein is Ketoisovalerate oxidoreductase subunit VorD (vorD).